The chain runs to 662 residues: Translation factor guf1, mitochondrial (662 aa).

A mitochondrion-targeting transit peptide spans 1–42 (MRGCLQLARWLSAAPNWPASSLLKAPGSSFATRLFTTTSSYK). The region spanning 64 to 244 (ERYRNFCIVA…TVVEKIPAPI (181 aa)) is the tr-type G domain. Residues 73–80 (AHVDHGKS), 137–141 (DTPGH), and 191–194 (NKVD) contribute to the GTP site.

It belongs to the TRAFAC class translation factor GTPase superfamily. Classic translation factor GTPase family. LepA subfamily.

It localises to the mitochondrion inner membrane. It carries out the reaction GTP + H2O = GDP + phosphate + H(+). In terms of biological role, promotes mitochondrial protein synthesis. May act as a fidelity factor of the translation reaction, by catalyzing a one-codon backward translocation of tRNAs on improperly translocated ribosomes. Binds to mitochondrial ribosomes in a GTP-dependent manner. The chain is Translation factor guf1, mitochondrial (guf1) from Emericella nidulans (strain FGSC A4 / ATCC 38163 / CBS 112.46 / NRRL 194 / M139) (Aspergillus nidulans).